The primary structure comprises 620 residues: Ferric/cupric reductase transmembrane component 7 (620 aa).

Residues 1–45 (MIEERDLVLSNGIHCIADIHSELYARLKKESQAVTPWVYQKQYGK) lie on the Extracellular side of the membrane. The helical transmembrane segment at 46–66 (FVTYFVAVIIFLSLIKKLAFM) threads the bilayer. Over 67 to 107 (YYDSSEEFLPEKKNSPTTPSVFLARIMTKLVAFNRYICYRK) the chain is Cytoplasmic. A helical transmembrane segment spans residues 108–128 (FPTLIFSYLGIPTSVGTFLVV). The Extracellular segment spans residues 129–167 (MATTLYTLLYCFVPHPFYRPCAGFGSPPLSVRAGIMAIS). In terms of domain architecture, Ferric oxidoreductase spans 161–320 (AGIMAISLVS…LAVKGYLRPG (160 aa)). The chain crosses the membrane as a helical span at residues 168–188 (LVSFVFSLSGKINVIGWLVGL). Over 189–194 (SYEKIN) the chain is Cytoplasmic. The chain crosses the membrane as a helical span at residues 195 to 215 (IYHQWASILCLFFSWVHVIPF). Residues H197 and H211 each coordinate heme. The Extracellular portion of the chain corresponds to 216 to 237 (LRQARHEGGYERMHQRWKASDM). Residues 238 to 258 (WRSGVPPILFLNLLWLSSLPI) form a helical membrane-spanning segment. Residues 259-265 (ARRHFYE) lie on the Cytoplasmic side of the membrane. A helical membrane pass occupies residues 266–286 (IFLQLHWILAVGFYISLFYHV). Residues H271 and H285 each contribute to the heme site. Topologically, residues 287-292 (YPELNS) are extracellular. Residues 293–313 (HMYLVATIVVWFAQLFYRLAV) traverse the membrane as a helical segment. Over 314–620 (KGYLRPGRSF…CYLHSESFGY (307 aa)) the chain is Cytoplasmic. The FAD-binding FR-type domain maps to 321–419 (RSFMASTIAN…DGPYGGIERD (99 aa)). 369 to 375 (HPFSIFP) lines the FAD pocket. The tract at residues 519–544 (SDQSDLAKREKDTEFGQDDTESNSTF) is disordered. The span at 523–532 (DLAKREKDTE) shows a compositional bias: basic and acidic residues.

This sequence belongs to the ferric reductase (FRE) family. It depends on FAD as a cofactor.

It is found in the cell membrane. It catalyses the reaction 2 a Fe(II)-siderophore + NADP(+) + H(+) = 2 a Fe(III)-siderophore + NADPH. Functionally, cell surface metalloreductase. May be involved in copper homeostasis. The protein is Ferric/cupric reductase transmembrane component 7 (FRE7) of Saccharomyces cerevisiae (strain YJM789) (Baker's yeast).